The sequence spans 1846 residues: C2 domain-containing protein (1846 aa).

The tract at residues 16 to 36 is disordered; sequence NTEKEEGKNAEINENNDPNTQ. The span at 17-26 shows a compositional bias: basic and acidic residues; the sequence is TEKEEGKNAE. Polar residues predominate over residues 27–36; that stretch reads INENNDPNTQ. The C2 domain maps to 497-623; it reads VPRYRQRGDI…FNEKNVRRNK (127 aa). Basic and acidic residues-rich tracts occupy residues 1193–1211 and 1230–1243; these read DEHT…DNYK and KDDH…KVSK. Disordered regions lie at residues 1193–1244, 1346–1370, 1456–1635, 1652–1692, and 1827–1846; these read DEHT…VSKS, KYTI…KKQD, KNER…KKRV, NEKM…NNER, and EEPS…VRKN. Residues 1349–1506 are a coiled coil; the sequence is INEKRDDIKT…DENMKEEQKM (158 aa). 4 stretches are compositionally biased toward basic and acidic residues: residues 1456–1474, 1481–1629, 1652–1663, and 1670–1692; these read KNER…QKDK, ESRD…MRRE, NEKMKKKEEKEE, and KEDI…NNER. Basic residues predominate over residues 1834–1846; that stretch reads SPQKKKIVIVRKN.

It is found in the membrane. Binds calcium and phospholipids. Regulates microneme secretion. The polypeptide is C2 domain-containing protein (Plasmodium falciparum (isolate 3D7)).